Consider the following 418-residue polypeptide: MIHSLFLINSAGDIFLEKHWKSVVSRSVCDYFFEAQERATEAENVPPVIPTPHHYLLSVYRHKIFFVAVIQTEVPPLFVIEFLHRVVDTFQDYFGVCSEPVIKDNVVVVYEVLEEMLDNGFPLATESNILKELIKPPTILRTVVNTITGSTNVGDQLPTGQLSVVPWRRTGVKYTNNEAYFDVVEEIDAIIDKSGSTVTAEIQGVIDACVKLTGMPDLTLSFMNPRLLDDVSFHPCVRFKRWESERILSFIPPDGNFRLLSYHVSAQNLVAIPVYVKHSISFRDSGSLGRFEITVGPKQTMGKTIEGVTVTSQMPKGVLNMSLTPSQGTHTFDPVTKMLSWDVGKINPQKLPSLKGTMGLQVGASKPDENPTINLQFKIQQLAISGLKVNRLDMYGEKYKPFKGIKYMTKAGKFQVRT.

An MHD domain is found at 176–417; it reads NNEAYFDVVE…MTKAGKFQVR (242 aa).

Belongs to the adaptor complexes medium subunit family. As to quaternary structure, adaptor protein complex 3 (AP-3) is a heterotetramer composed of two large adaptins (delta-type subunit AP3D1 and beta-type subunit AP3B1 or AP3B2), a medium adaptin (mu-type subunit AP3M1 or AP3M2) and a small adaptin (sigma-type subunit APS1 or AP3S2). AP-3 associates with the BLOC-1 complex.

The protein localises to the golgi apparatus. The protein resides in the cytoplasmic vesicle membrane. Functionally, component of the adaptor complexes which link clathrin to receptors in coated vesicles. Clathrin-associated protein complexes are believed to interact with the cytoplasmic tails of membrane proteins, leading to their selection and concentration. Ap47 is a subunit of the plasma membrane adaptor. In concert with the BLOC-1 complex, AP-3 is required to target cargos into vesicles assembled at cell bodies for delivery into neurites and nerve terminals. The sequence is that of AP-3 complex subunit mu-2 (Ap3m2) from Rattus norvegicus (Rat).